The primary structure comprises 432 residues: Adenylosuccinate synthetase (432 aa).

GTP is bound by residues 12–18 (GDEGKGK) and 40–42 (GHT). The active-site Proton acceptor is aspartate 13. Positions 13 and 40 each coordinate Mg(2+). IMP is bound by residues 13 to 16 (DEGK), 38 to 41 (NAGH), threonine 130, arginine 144, glutamine 225, threonine 240, and arginine 304. Histidine 41 serves as the catalytic Proton donor. 300-306 (STTGRPR) provides a ligand contact to substrate. Residues arginine 306, 332–334 (KLD), and 414–416 (SVG) contribute to the GTP site.

It belongs to the adenylosuccinate synthetase family. Homodimer. Mg(2+) is required as a cofactor.

It is found in the cytoplasm. The enzyme catalyses IMP + L-aspartate + GTP = N(6)-(1,2-dicarboxyethyl)-AMP + GDP + phosphate + 2 H(+). It participates in purine metabolism; AMP biosynthesis via de novo pathway; AMP from IMP: step 1/2. Functionally, plays an important role in the de novo pathway of purine nucleotide biosynthesis. Catalyzes the first committed step in the biosynthesis of AMP from IMP. The chain is Adenylosuccinate synthetase from Geobacter sp. (strain M21).